Here is a 742-residue protein sequence, read N- to C-terminus: Alcohol dehydrogenase (quinone), dehydrogenase subunit (742 aa).

A signal peptide spans 1 to 35 (MTRPASAKRRSLLGILAAGTICAAALPYAAVPARA). A pyrroloquinoline quinone-binding site is contributed by glutamate 96. Residues cysteine 142 and cysteine 143 are joined by a disulfide bond. Arginine 148 is a binding site for pyrroloquinoline quinone. Glutamate 216 is a binding site for Ca(2+). Threonine 278 contacts pyrroloquinoline quinone. The Ca(2+) site is built by asparagine 298 and aspartate 343. The active-site Proton acceptor is the aspartate 343. Pyrroloquinoline quinone-binding residues include lysine 370 and isoleucine 584. The region spanning 636-715 (KVVDNGYFQY…AIRQYLIKRA (80 aa)) is the Cytochrome c domain. Positions 649, 652, 653, and 692 each coordinate heme c. Residues 722 to 732 (EVDARKNDKNI) show a composition bias toward basic and acidic residues. The interval 722–742 (EVDARKNDKNIPENPTLGINP) is disordered.

The protein belongs to the bacterial PQQ dehydrogenase family. As to quaternary structure, the alcohol dehydrogenase multicomponent enzyme system is composed of a dehydrogenase subunit I (AdhA) and a cytochrome c subunit II (AdhB). It depends on pyrroloquinoline quinone as a cofactor. Requires Ca(2+) as cofactor. Heme c is required as a cofactor.

The protein resides in the cell membrane. The catalysed reaction is ethanol + a ubiquinone = a ubiquinol + acetaldehyde. Dehydrogenase component of the alcohol dehydrogenase multicomponent enzyme system which is involved in the production of acetic acid and in the ethanol oxidase respiratory chain. Quinohemoprotein alcohol dehydrogenase (ADH) catalyzes the oxidation of ethanol to acetaldehyde by transferring electrons to the ubiquinone embedded in the membrane phospholipids. The electrons transfer from ethanol to membranous ubiquinone occurs from pyrroloquinoline quinone (PQQ) to one heme c in subunit I (AdhA), and finally to two heme c in subunit II (AdhB). Besides ubiquinone reduction, ADH also has a ubiquinol (QH2) oxidation reaction which mediates electron transfer from ubiquinol to the non-energy generating bypass oxidase system. The electrons transfer occurs from ubiquinol (QH2) to the additional heme c within subunit II (AdhB). The polypeptide is Alcohol dehydrogenase (quinone), dehydrogenase subunit (Acetobacter aceti).